We begin with the raw amino-acid sequence, 291 residues long: GTPase Era (291 aa).

The 166-residue stretch at 2-167 (KSGFVSIIGR…LDEIVKCLNE (166 aa)) folds into the Era-type G domain. The interval 10 to 17 (GRTNAGKS) is G1. 10 to 17 (GRTNAGKS) contributes to the GTP binding site. Residues 36 to 40 (NATRR) form a G2 region. Residues 57–60 (DTPG) are G3. Residues 57–61 (DTPGL) and 116–119 (NKVD) contribute to the GTP site. Residues 116–119 (NKVD) form a G4 region. The interval 146-148 (YSS) is G5. The 89-residue stretch at 186-274 (YRDFILESIY…LLKLFVTVKK (89 aa)) folds into the KH type-2 domain.

This sequence belongs to the TRAFAC class TrmE-Era-EngA-EngB-Septin-like GTPase superfamily. Era GTPase family. As to quaternary structure, monomer.

Its subcellular location is the cytoplasm. It localises to the cell inner membrane. Functionally, an essential GTPase that binds both GDP and GTP, with rapid nucleotide exchange. Plays a role in 16S rRNA processing and 30S ribosomal subunit biogenesis and possibly also in cell cycle regulation and energy metabolism. This is GTPase Era from Campylobacter jejuni subsp. doylei (strain ATCC BAA-1458 / RM4099 / 269.97).